Consider the following 218-residue polypeptide: Small ribosomal subunit protein uS3 (218 aa).

Residues 38-106 (IRTFLKKKLY…KLVVDIKEVK (69 aa)) enclose the KH type-2 domain.

This sequence belongs to the universal ribosomal protein uS3 family. As to quaternary structure, part of the 30S ribosomal subunit. Forms a tight complex with proteins S10 and S14.

Binds the lower part of the 30S subunit head. Binds mRNA in the 70S ribosome, positioning it for translation. This chain is Small ribosomal subunit protein uS3, found in Agathobacter rectalis (strain ATCC 33656 / DSM 3377 / JCM 17463 / KCTC 5835 / VPI 0990) (Eubacterium rectale).